Consider the following 356-residue polypeptide: D-alanine--D-alanine ligase (356 aa).

An ATP-grasp domain is found at 134–339 (KQLFAHRGLP…YSDLIKKLIE (206 aa)). An ATP-binding site is contributed by 167-222 (HDKLEYPVFVKPANLGSSVGISKCNNEEELKNGIEEAFQFDRKLVIEQGIEAREIE). Aspartate 293, glutamate 306, and asparagine 308 together coordinate Mg(2+).

This sequence belongs to the D-alanine--D-alanine ligase family. It depends on Mg(2+) as a cofactor. Requires Mn(2+) as cofactor.

Its subcellular location is the cytoplasm. It carries out the reaction 2 D-alanine + ATP = D-alanyl-D-alanine + ADP + phosphate + H(+). It functions in the pathway cell wall biogenesis; peptidoglycan biosynthesis. Its function is as follows. Cell wall formation. The polypeptide is D-alanine--D-alanine ligase (Staphylococcus saprophyticus subsp. saprophyticus (strain ATCC 15305 / DSM 20229 / NCIMB 8711 / NCTC 7292 / S-41)).